Consider the following 244-residue polypeptide: LOB domain-containing protein 17 (244 aa).

The 103-residue stretch at 6–108 (SPCGACKFLR…TQLEILKQQA (103 aa)) folds into the LOB domain.

This sequence belongs to the LOB domain-containing protein family. In terms of tissue distribution, expressed in roots, stems, leaves and flowers.

In Arabidopsis thaliana (Mouse-ear cress), this protein is LOB domain-containing protein 17 (LBD17).